A 138-amino-acid polypeptide reads, in one-letter code: Ribulose bisphosphate carboxylase small subunit (138 aa).

Belongs to the RuBisCO small chain family. In terms of assembly, heterohexadecamer of 8 large and 8 small subunits.

The protein resides in the plastid. The protein localises to the chloroplast. Its function is as follows. RuBisCO catalyzes two reactions: the carboxylation of D-ribulose 1,5-bisphosphate, the primary event in carbon dioxide fixation, as well as the oxidative fragmentation of the pentose substrate in the photorespiration process. Both reactions occur simultaneously and in competition at the same active site. Although the small subunit is not catalytic it is essential for maximal activity. Carbon dioxide and oxygen bind in the same pocket of the enzyme in a similar manner. The protein is Ribulose bisphosphate carboxylase small subunit of Galdieria sulphuraria (Red alga).